Consider the following 154-residue polypeptide: Ribosome maturation factor RimP (154 aa).

Belongs to the RimP family.

The protein localises to the cytoplasm. Functionally, required for maturation of 30S ribosomal subunits. The chain is Ribosome maturation factor RimP from Deinococcus deserti (strain DSM 17065 / CIP 109153 / LMG 22923 / VCD115).